The chain runs to 135 residues: Basic phospholipase A2 6 (135 aa).

Cystine bridges form between C28/C87, C42/C134, C44/C60, C59/C115, C66/C108, C76/C101, and C94/C106. Ca(2+) is bound by residues Y43, G45, and G47. H63 is an active-site residue. Ca(2+) is bound at residue D64. Residue D109 is part of the active site.

Belongs to the phospholipase A2 family. Group I subfamily. D49 sub-subfamily. Ca(2+) is required as a cofactor. Expressed by the venom gland.

Its subcellular location is the secreted. The enzyme catalyses a 1,2-diacyl-sn-glycero-3-phosphocholine + H2O = a 1-acyl-sn-glycero-3-phosphocholine + a fatty acid + H(+). In terms of biological role, snake venom phospholipase A2 (PLA2) that inhibits neuromuscular transmission by blocking acetylcholine release from the nerve termini. PLA2 catalyzes the calcium-dependent hydrolysis of the 2-acyl groups in 3-sn-phosphoglycerides. Very weakly suppress the acetylcholine (ACh)-evoked current mediated by alpha-7-similar nAChRs in L.stagnalis neurons. The sequence is that of Basic phospholipase A2 6 from Bungarus fasciatus (Banded krait).